The sequence spans 105 residues: MAEWSGEYISPYAEHGKKSEQVKKITVSIPLKVLKILTDERTRRQVNNLRHATNSELLCEAFLHAFTGQPLPDDADLRKERSDEIPEAAKEIMREMGIDPETWEY.

Belongs to the MetJ family. As to quaternary structure, homodimer.

Its subcellular location is the cytoplasm. Functionally, this regulatory protein, when combined with SAM (S-adenosylmethionine) represses the expression of the methionine regulon and of enzymes involved in SAM synthesis. The protein is Met repressor of Salmonella dublin (strain CT_02021853).